Here is a 312-residue protein sequence, read N- to C-terminus: DNA-directed RNA polymerase subunit alpha (312 aa).

Positions 1-229 (MLQYQIDRIE…ELFQPLATVT (229 aa)) are alpha N-terminal domain (alpha-NTD). The tract at residues 236–312 (IEPEPSAEAQ…ISIPQSRTSV (77 aa)) is alpha C-terminal domain (alpha-CTD).

The protein belongs to the RNA polymerase alpha chain family. In terms of assembly, in cyanobacteria the RNAP catalytic core is composed of 2 alpha, 1 beta, 1 beta', 1 gamma and 1 omega subunit. When a sigma factor is associated with the core the holoenzyme is formed, which can initiate transcription.

The catalysed reaction is RNA(n) + a ribonucleoside 5'-triphosphate = RNA(n+1) + diphosphate. Functionally, DNA-dependent RNA polymerase catalyzes the transcription of DNA into RNA using the four ribonucleoside triphosphates as substrates. This chain is DNA-directed RNA polymerase subunit alpha, found in Synechococcus sp. (strain CC9311).